A 383-amino-acid chain; its full sequence is Arginine biosynthesis bifunctional protein ArgJ (383 aa).

Positions 146, 168, 179, 259, 378, and 383 each coordinate substrate. Threonine 179 serves as the catalytic Nucleophile.

Belongs to the ArgJ family. Heterotetramer of two alpha and two beta chains.

Its subcellular location is the cytoplasm. The enzyme catalyses N(2)-acetyl-L-ornithine + L-glutamate = N-acetyl-L-glutamate + L-ornithine. The catalysed reaction is L-glutamate + acetyl-CoA = N-acetyl-L-glutamate + CoA + H(+). The protein operates within amino-acid biosynthesis; L-arginine biosynthesis; L-ornithine and N-acetyl-L-glutamate from L-glutamate and N(2)-acetyl-L-ornithine (cyclic): step 1/1. Its pathway is amino-acid biosynthesis; L-arginine biosynthesis; N(2)-acetyl-L-ornithine from L-glutamate: step 1/4. Its function is as follows. Catalyzes two activities which are involved in the cyclic version of arginine biosynthesis: the synthesis of N-acetylglutamate from glutamate and acetyl-CoA as the acetyl donor, and of ornithine by transacetylation between N(2)-acetylornithine and glutamate. This chain is Arginine biosynthesis bifunctional protein ArgJ, found in Streptomyces avermitilis (strain ATCC 31267 / DSM 46492 / JCM 5070 / NBRC 14893 / NCIMB 12804 / NRRL 8165 / MA-4680).